The sequence spans 149 residues: 3-hydroxyacyl-[acyl-carrier-protein] dehydratase FabZ (149 aa).

The active site involves H53.

The protein belongs to the thioester dehydratase family. FabZ subfamily.

It localises to the cytoplasm. It carries out the reaction a (3R)-hydroxyacyl-[ACP] = a (2E)-enoyl-[ACP] + H2O. Its function is as follows. Involved in unsaturated fatty acids biosynthesis. Catalyzes the dehydration of short chain beta-hydroxyacyl-ACPs and long chain saturated and unsaturated beta-hydroxyacyl-ACPs. The protein is 3-hydroxyacyl-[acyl-carrier-protein] dehydratase FabZ of Polynucleobacter asymbioticus (strain DSM 18221 / CIP 109841 / QLW-P1DMWA-1) (Polynucleobacter necessarius subsp. asymbioticus).